Here is a 445-residue protein sequence, read N- to C-terminus: MREVISIHVGQAGIQIGNACWELFCLEHGIQPDGQMPSDKTIGGGDDAFNTFFSETGAEKHVPRCVFLDLEPTVIDEVRTGTYRQLFHPEQLISGKEDAANNFARGHYTIGKEIVDLCLDRIRKLADQCTGLQGFLVFNSVGGGTGSGLGSLLLERLSVDYGKKSKLGFTVYPSPQVSTAVVEPYNSVLSTHSLLEHTDVAVMLDNEAVYDICRRNLDIERPTYTNLNRLIAQVISSLTASLRFDGALNVDVTEFQTNLVPYPSVIIRPSTPAEKAYHEQLSVAEITNSAFEPASMMAKCDPRHGKYMACCLMYRGDVVPKDVNAAVATIKTKRTIQFVDWCPTGFKCGINYQPPTVVPSGDPAKVMRAVCMISNSTAIAEVFSRIDHKFDLMYAKRAFVHWYVGEGMEEGEFSEVREDLAALEKDYEEVGIEIVEGEGEEEGME.

A GTP-binding site is contributed by Gln-11. At Lys-40 the chain carries N6-acetyllysine. 7 residues coordinate GTP: Glu-71, Ser-140, Gly-144, Thr-145, Thr-179, Asn-206, and Asn-228. Glu-71 contacts Mg(2+). Residue Glu-254 is part of the active site.

It belongs to the tubulin family. Dimer of alpha and beta chains. A typical microtubule is a hollow water-filled tube with an outer diameter of 25 nm and an inner diameter of 15 nM. Alpha-beta heterodimers associate head-to-tail to form protofilaments running lengthwise along the microtubule wall with the beta-tubulin subunit facing the microtubule plus end conferring a structural polarity. Microtubules usually have 13 protofilaments but different protofilament numbers can be found in some organisms and specialized cells. Mg(2+) is required as a cofactor. In terms of processing, acetylation of alpha chains at Lys-40 stabilizes microtubules and affects affinity and processivity of microtubule motors. This modification has a role in multiple cellular functions, ranging from cell motility, cell cycle progression or cell differentiation to intracellular trafficking and signaling.

Its subcellular location is the cytoplasm. The protein localises to the cytoskeleton. The catalysed reaction is GTP + H2O = GDP + phosphate + H(+). Its function is as follows. Tubulin is the major constituent of microtubules, a cylinder consisting of laterally associated linear protofilaments composed of alpha- and beta-tubulin heterodimers. Microtubules grow by the addition of GTP-tubulin dimers to the microtubule end, where a stabilizing cap forms. Below the cap, tubulin dimers are in GDP-bound state, owing to GTPase activity of alpha-tubulin. This is Tubulin alpha-1 chain from Stylonychia lemnae (Ciliate).